The sequence spans 487 residues: Lysophospholipid acyltransferase 5 (487 aa).

An N-acetylalanine modification is found at alanine 2. The next 6 membrane-spanning stretches (helical) occupy residues 44–64, 67–87, 111–131, 178–198, 236–256, and 285–305; these read LIFS…YLFY, SYLI…FNFG, ITAV…GYYY, ILGV…GAFL, LGLV…EDYL, and VTCW…FNGF. Asparagine 308 carries an N-linked (GlcNAc...) asparagine glycan. Residues asparagine 338 and histidine 374 contribute to the active site. The next 3 helical transmembrane spans lie at 364–384, 422–442, and 453–473; these read GLSL…LICF, LVQQ…FCLF, and SIYF…PYVY. The short motif at 484 to 487 is the Di-lysine motif element; the sequence is KKRE.

It belongs to the membrane-bound acyltransferase family.

The protein localises to the endoplasmic reticulum membrane. The catalysed reaction is a 1-acyl-sn-glycero-3-phosphocholine + an acyl-CoA = a 1,2-diacyl-sn-glycero-3-phosphocholine + CoA. The enzyme catalyses a 1-acyl-sn-glycero-3-phosphoethanolamine + an acyl-CoA = a 1,2-diacyl-sn-glycero-3-phosphoethanolamine + CoA. It carries out the reaction a 1-acyl-sn-glycero-3-phospho-L-serine + an acyl-CoA = a 1,2-diacyl-sn-glycero-3-phospho-L-serine + CoA. It catalyses the reaction (9Z,12Z)-octadecadienoyl-CoA + a 1-acyl-sn-glycero-3-phosphocholine = 1-acyl-2-(9Z,12Z)-octadecadienoyl-sn-glycero-3-phosphocholine + CoA. The catalysed reaction is (5Z,8Z,11Z,14Z)-eicosatetraenoyl-CoA + a 1-acyl-sn-glycero-3-phosphocholine = 1-acyl-2-(5Z,8Z,11Z,14Z-eicosatetraenoyl)-sn-glycero-3-phosphocholine + CoA. The enzyme catalyses dodecanoyl-CoA + 1-hexadecanoyl-sn-glycero-3-phosphocholine = 1-hexadecanoyl-2-dodecanoyl-sn-glycero-3-phosphocholine + CoA. It carries out the reaction octadecanoyl-CoA + 1-hexadecanoyl-sn-glycero-3-phosphocholine = 1-hexadecanoyl-2-octadecanoyl-sn-glycero-3-phosphocholine + CoA. It catalyses the reaction 1-dodecanoyl-sn-glycero-3-phosphocholine + hexadecanoyl-CoA = 1-dodecanoyl-2-hexadecanoyl-sn-glycero-3-phosphocholine + CoA. The catalysed reaction is 1-tetradecanoyl-sn-glycero-3-phosphocholine + hexadecanoyl-CoA = 1-tetradecanoyl-2-hexadecanoyl-sn-glycero-3-phosphocholine + CoA. The enzyme catalyses 1-hexadecanoyl-sn-glycero-3-phosphocholine + hexadecanoyl-CoA = 1,2-dihexadecanoyl-sn-glycero-3-phosphocholine + CoA. It carries out the reaction 1-octadecanoyl-sn-glycero-3-phosphocholine + hexadecanoyl-CoA = 1-octadecanoyl-2-hexadecanoyl-sn-glycero-3-phosphocholine + CoA. It catalyses the reaction 1-(9Z-octadecenoyl)-sn-glycero-3-phosphocholine + hexadecanoyl-CoA = 1-(9Z-octadecenoyl)-2-hexadecanoyl-sn-glycero-3-phosphocholine + CoA. The catalysed reaction is (9Z)-hexadecenoyl-CoA + 1-hexadecanoyl-sn-glycero-3-phosphocholine = 1-hexadecanoyl-2-(9Z-hexadecenoyl)-sn-glycero-3-phosphocholine + CoA. The enzyme catalyses 1-hexadecanoyl-sn-glycero-3-phosphocholine + (9Z)-octadecenoyl-CoA = 1-hexadecanoyl-2-(9Z-octadecenoyl)-sn-glycero-3-phosphocholine + CoA. It carries out the reaction (9Z,12Z)-octadecadienoyl-CoA + 1-hexadecanoyl-sn-glycero-3-phosphocholine = 1-hexadecanoyl-2-(9Z,12Z-octadecadienoyl)-sn-glycero-3-phosphocholine + CoA. It catalyses the reaction 1-dodecanoyl-sn-glycero-3-phosphocholine + (5Z,8Z,11Z,14Z)-eicosatetraenoyl-CoA = 1-dodecanoyl-2-(5Z,8Z,11Z,14Z)-eicosatetraenoyl-sn-glycero-3-phosphocholine + CoA. The catalysed reaction is (5Z,8Z,11Z,14Z)-eicosatetraenoyl-CoA + 1-hexadecanoyl-sn-glycero-3-phosphocholine = 1-hexadecanoyl-2-(5Z,8Z,11Z,14Z-eicosatetraenoyl)-sn-glycero-3-phosphocholine + CoA. The enzyme catalyses 1-octadecanoyl-sn-glycero-3-phosphocholine + (5Z,8Z,11Z,14Z)-eicosatetraenoyl-CoA = 1-octadecanoyl-2-(5Z,8Z,11Z,14Z-eicosatetraenoyl)-sn-glycero-3-phosphocholine + CoA. It carries out the reaction 1-eicosanoyl-sn-glycero-3-phosphocholine + (5Z,8Z,11Z,14Z)-eicosatetraenoyl-CoA = 1-eicosanoyl-2-(5Z,8Z,11Z,14Z)-eicosatetraenoyl-sn-glycero-3-phosphocholine + CoA. It catalyses the reaction 1-(9Z-octadecenoyl)-sn-glycero-3-phosphocholine + (9Z)-octadecenoyl-CoA = 1,2-di-(9Z-octadecenoyl)-sn-glycero-3-phosphocholine + CoA. The catalysed reaction is 1-(9Z-octadecenoyl)-sn-glycero-3-phosphocholine + (9Z,12Z)-octadecadienoyl-CoA = 1-(9Z)-octadecenoyl-2-(9Z,12Z)-octadecadienoyl-sn-glycero-3-phosphocholine + CoA. The enzyme catalyses 1-(9Z-octadecenoyl)-sn-glycero-3-phosphocholine + (5Z,8Z,11Z,14Z)-eicosatetraenoyl-CoA = 1-(9Z)-octadecenoyl-2-(5Z,8Z,11Z,14Z)-icosatetraenoyl-sn-glycero-3-phosphocholine + CoA. It carries out the reaction a 1-acyl-sn-glycero-3-phosphoethanolamine + (9Z,12Z)-octadecadienoyl-CoA = 1-acyl-2-(9Z,12Z)-octadecadienoyl-sn-glycero-3-phosphoethanolamine + CoA. It catalyses the reaction 1-(9Z-octadecenoyl)-sn-glycero-3-phosphoethanolamine + (9Z,12Z)-octadecadienoyl-CoA = 1-(9Z)-octadecenoyl-2-(9Z,12Z)-octadecadienoyl-sn-glycero-3-phosphoethanolamine + CoA. The catalysed reaction is 1-(10Z-heptadecenoyl)-sn-glycero-3-phosphoethanolamine + (9Z,12Z)-octadecadienoyl-CoA = 1-(10Z-heptadecenoyl)-2-(9Z,12Z-octadecadienoyl)-sn-glycero-3-phosphoethanolamine + CoA. The enzyme catalyses a 1-acyl-sn-glycero-3-phosphoethanolamine + (5Z,8Z,11Z,14Z)-eicosatetraenoyl-CoA = 1-acyl-2-(5Z,8Z,11Z,14Z)-eicosatetraenoyl-sn-glycero-3-phosphoethanolamine + CoA. It carries out the reaction 1-hexadecanoyl-sn-glycero-3-phosphoethanolamine + (5Z,8Z,11Z,14Z)-eicosatetraenoyl-CoA = 1-hexadecanoyl-2-(5Z,8Z,11Z,14Z-eicosatetraenoyl)-sn-glycero-3-phosphoethanolamine + CoA. It catalyses the reaction 1-(9Z-octadecenoyl)-sn-glycero-3-phosphoethanolamine + (5Z,8Z,11Z,14Z)-eicosatetraenoyl-CoA = 1-(9Z)-octadecenoyl-2-(5Z,8Z,11Z,14Z)-eicosatetraenoyl-sn-glycero-3-phosphoethanolamine + CoA. The catalysed reaction is 1-(10Z-heptadecenoyl)-sn-glycero-3-phosphoethanolamine + (5Z,8Z,11Z,14Z)-eicosatetraenoyl-CoA = 1-(10Z-heptadecenoyl)-2-(5Z,8Z,11Z,14Z-eicosatetraenoyl)-sn-glycero-3-phosphoethanolamine + CoA. The enzyme catalyses a 1-O-(1Z-alkenyl)-sn-glycero-3-phosphoethanolamine + (5Z,8Z,11Z,14Z)-eicosatetraenoyl-CoA = 1-O-(1Z)-alkenyl-2-(5Z,8Z,11Z,14Z)-eicosatetraenoyl-sn-glycero-3-phosphoethanolamine + CoA. It carries out the reaction a 1-acyl-sn-glycero-3-phospho-L-serine + (9Z,12Z)-octadecadienoyl-CoA = 1-acyl-2-(9Z,12Z-octadecadienoyl)-sn-glycero-3-phospho-L-serine + CoA. It catalyses the reaction a 1-acyl-sn-glycero-3-phospho-L-serine + (5Z,8Z,11Z,14Z)-eicosatetraenoyl-CoA = 1-acyl-2-(5Z,8Z,11Z,14Z-eicosatetraenoyl)-sn-glycero-3-phospho-L-serine + CoA. The catalysed reaction is 1-hexadecanoyl-sn-glycero-3-phospho-L-serine + (9Z)-octadecenoyl-CoA = 1-hexadecanoyl-2-(9Z-octadecenoyl)-sn-glycero-3-phospho-L-serine + CoA. The enzyme catalyses 1-(9Z-octadecenoyl)-sn-glycero-3-phospho-L-serine + (9Z)-octadecenoyl-CoA = 1,2-di-(9Z)-octadecenoyl-sn-glycero-3-phospho-L-serine + CoA. It carries out the reaction 1-hexadecanoyl-sn-glycero-3-phospho-L-serine + (9Z,12Z)-octadecadienoyl-CoA = 1-hexadecanoyl-2-(9Z,12Z-octadecadienoyl)-sn-glycero-3-phospho-L-serine + CoA. It catalyses the reaction 1-(9Z-octadecenoyl)-sn-glycero-3-phospho-L-serine + (9Z,12Z)-octadecadienoyl-CoA = 1-(9Z-octadecenoyl)-2-(9Z,12Z-octadienoyl)-sn-glycero-3-phospho-L-serine + CoA. The catalysed reaction is 1-hexadecanoyl-sn-glycero-3-phospho-L-serine + (5Z,8Z,11Z,14Z)-eicosatetraenoyl-CoA = 1-hexadecanoyl-2-(5Z,8Z,11Z,14Z-eicosatetraenoyl)-sn-glycero-3-phospho-L-serine + CoA. The enzyme catalyses 1-(9Z-octadecenoyl)-sn-glycero-3-phospho-L-serine + (5Z,8Z,11Z,14Z)-eicosatetraenoyl-CoA = 1-(9Z-octadecenoyl)-2-(5Z,8Z,11Z,14Z-eicosatetraenoyl)-sn-glycero-3-phospho-L-serine + CoA. It participates in lipid metabolism; phospholipid metabolism. Lysophospholipid O-acyltransferase (LPLAT) that catalyzes the reacylation step of the phospholipid remodeling process also known as the Lands cycle. Catalyzes transfer of the fatty acyl chain from fatty acyl-CoA to 1-acyl lysophospholipid to form various classes of phospholipids. Converts 1-acyl lysophosphatidylcholine (LPC) into phosphatidylcholine (PC) (LPCAT activity), 1-acyl lysophosphatidylserine (LPS) into phosphatidylserine (PS) (LPSAT activity) and 1-acyl lysophosphatidylethanolamine (LPE) into phosphatidylethanolamine (PE) (LPEAT activity). Favors polyunsaturated fatty acyl-CoAs as acyl donors compared to saturated fatty acyl-CoAs. Has higher activity for LPC acyl acceptors compared to LPEs and LPSs. Can also transfer the fatty acyl chain from fatty acyl-CoA to 1-O-alkyl lysophospholipid or 1-O-alkenyl lysophospholipid with lower efficiency. Acts as a major LPC O-acyltransferase in liver and intestine. As a component of the liver X receptor/NR1H3 or NR1H2 signaling pathway, mainly catalyzes the incorporation of arachidonate into PCs of endoplasmic reticulum (ER) membranes, increasing membrane dynamics and enabling triacylglycerols transfer to nascent very low-density lipoprotein (VLDL) particles. Promotes processing of sterol regulatory protein SREBF1 in hepatocytes, likely by facilitating the translocation of SREBF1-SCAP complex from ER to the Golgi apparatus. Participates in mechanisms by which the liver X receptor/NR1H3 or NR1H2 signaling pathway counteracts lipid-induced ER stress response and inflammation. Down-regulates hepatic inflammation by limiting arachidonic acid availability for synthesis of inflammatory eicosanoids, such as prostaglandins. In enterocytes, acts as a component of a gut-brain feedback loop that coordinates dietary lipid absorption and food intake. Regulates the abundance of PCs containing linoleate and arachidonate in enterocyte membranes, enabling passive diffusion of fatty acids and cholesterol across the membrane for efficient chylomicron assembly. In the intestinal crypt, acts as a component of dietary-responsive phospholipid-cholesterol axis, regulating the biosynthesis of cholesterol and its mitogenic effects on intestinal stem cells. In Rattus norvegicus (Rat), this protein is Lysophospholipid acyltransferase 5 (Lpcat3).